The primary structure comprises 462 residues: Trigger factor (462 aa).

The 86-residue stretch at 172–257 (GDKATIDFVG…LKALAAPGET (86 aa)) folds into the PPIase FKBP-type domain. The disordered stretch occupies residues 443 to 462 (LLAADEEDEEEAAESSAALV). Positions 444–455 (LAADEEDEEEAA) are enriched in acidic residues.

It belongs to the FKBP-type PPIase family. Tig subfamily.

The protein resides in the cytoplasm. It catalyses the reaction [protein]-peptidylproline (omega=180) = [protein]-peptidylproline (omega=0). Involved in protein export. Acts as a chaperone by maintaining the newly synthesized protein in an open conformation. Functions as a peptidyl-prolyl cis-trans isomerase. The polypeptide is Trigger factor (Methylocella silvestris (strain DSM 15510 / CIP 108128 / LMG 27833 / NCIMB 13906 / BL2)).